We begin with the raw amino-acid sequence, 462 residues long: B3 domain-containing protein REM8 (462 aa).

3 DNA-binding regions (TF-B3) span residues 11-103 (NKHF…LGPS), 148-243 (CFSQ…LCSR), and 249-346 (FVKL…FSKI). A disordered region spans residues 351–419 (FEAEDRRHKR…NLQKTQACSV (69 aa)). Residues 369–397 (ETDKGEPSRATKMGPELEKREKTAEKGEP) are compositionally biased toward basic and acidic residues. The span at 399-418 (RASNKSSGKQGNLQKTQACS) shows a compositional bias: polar residues.

The protein localises to the nucleus. The protein is B3 domain-containing protein REM8 (REM8) of Arabidopsis thaliana (Mouse-ear cress).